The chain runs to 234 residues: Venom allergen 3 (234 aa).

An N-terminal signal peptide occupies residues 1–22 (MELIVSILWLAITAENLANTLA). 4 disulfides stabilise this stretch: cysteine 26–cysteine 41, cysteine 31–cysteine 125, cysteine 52–cysteine 118, and cysteine 198–cysteine 216. One can recognise an SCP domain in the interval 69–218 (VNKHNELRQR…WTKHYLVCNY (150 aa)). The segment at 80-99 (ASGKEMRGTNGPQPPAVKMP) is disordered.

The protein belongs to the CRISP family. In terms of tissue distribution, expressed by the venom gland.

Its subcellular location is the secreted. This chain is Venom allergen 3, found in Solenopsis invicta (Red imported fire ant).